A 452-amino-acid chain; its full sequence is Keratin, type II cytoskeletal 80 (452 aa).

The tract at residues 1–82 (MAYRSCVVGF…DPAVQQQKNQ (82 aa)) is head. Phosphoserine is present on Ser45. The coil 1A stretch occupies residues 82–118 (QEKEEMKALNDKFASLIGKVQALEQRNQLLETRWSFL). Residues 83–394 (EKEEMKALND…KLMEGEESRM (312 aa)) enclose the IF rod domain. The tract at residues 119–135 (QGQGSATFDLSHHYETF) is linker 1. The coil 1B stretch occupies residues 136-227 (QGRLQEELRK…TVYEQELKDL (92 aa)). Residues 228–251 (TAQVKDVSVTVGLDSRCHIDLSGI) are linker 12. Residues 252–390 (VEEVKAQYDA…ATYHKLMEGE (139 aa)) form a coil 2 region. Residues 391 to 452 (ESRMDLPSAT…YLSQESEASE (62 aa)) are tail. The segment at 412–452 (TASKSGLTKTSSRKKKNRRGPVIKITEMSEKYLSQESEASE) is disordered. Over residues 422–432 (SSRKKKNRRGP) the composition is skewed to basic residues. The span at 443 to 452 (YLSQESEASE) shows a compositional bias: polar residues.

The protein belongs to the intermediate filament family. Heterotetramer of two type I and two type II keratins.

In Mus musculus (Mouse), this protein is Keratin, type II cytoskeletal 80 (Krt80).